Reading from the N-terminus, the 547-residue chain is MFS-type transporter ltbE (547 aa).

Residues 1–23 (MEIAAETTGPAGVTTDVTNAEES) are disordered. The next 13 membrane-spanning stretches (helical) occupy residues 33 to 53 (QGWA…VLAI), 74 to 94 (DIGW…PTCG), 104 to 124 (WVYC…AVAP), 135 to 155 (ISGL…SYCV), 165 to 185 (PIVL…GGSI), 195 to 215 (FIFW…WFTL), 240 to 260 (ATLL…GGIV), 267 to 287 (KVFG…CLQW), 310 to 330 (GFMM…PIYF), 343 to 363 (INLL…GSLA), 370 to 390 (VPFM…YQLV), 399 to 419 (WIGF…MPIL), and 432 to 452 (TGLV…PSVG). Residue asparagine 463 is glycosylated (N-linked (GlcNAc...) asparagine). A helical membrane pass occupies residues 506 to 526 (VFWVGVATPALAWIASWAMEW).

The protein belongs to the major facilitator superfamily. TCR/Tet family.

It is found in the cell membrane. MFS-type transporter; part of the gene cluster that mediates the biosynthesis of luteodienoside A, a glycosylated polyketide consisting of an unusual 1-O-beta-D-glucopyranosyl-myo-inositol (glucinol) ester of 3-hydroxy-2,2,4-trimethylocta-4,6-dienoic acid. LtbE is probably involved in the secretion of luteodienoside A. This is MFS-type transporter ltbE from Aspergillus luteorubrus.